Reading from the N-terminus, the 206-residue chain is Protein Nef (206 aa).

Gly2 carries the N-myristoyl glycine; by host lipid modification. The residue at position 6 (Ser6) is a Phosphoserine; by host. Residues Glu62–Lys65 form an acidic; interacts with host PACS1 and PACS2; stabilizes the interaction of NEF/MHC-I with host AP1M1; necessary for MHC-I internalization region. The SH3-binding; interaction with Src family tyrosine kinases stretch occupies residues Pro69 to Pro78. A PxxP; stabilizes the interaction of NEF/MHC-I with host AP1M1; necessary for MHC-I internalization motif is present at residues Pro72–Pro75. The segment at Asp108–Trp124 is mediates dimerization, Nef-PTE1 interaction. Residues Val148–Val180 are binding to ATP6V1H. The short motif at Leu164–Leu165 is the Dileucine internalization motif; necessary for CD4 internalization element. Residues Asp174–Asp175 carry the Diacidic; necessary for CD4 internalization motif.

This sequence belongs to the lentivirus primate group Nef protein family. As to quaternary structure, monomer; cytosolic form. Homodimer; membrane bound form. Interacts with Nef associated p21-activated kinase (PAK2); this interaction activates PAK2. Associates with the Nef-MHC-I-AP1 complex; this complex is required for MHC-I internalization. Interacts (via C-terminus) with host PI3-kinase. Interacts with host PACS1; this interaction seems to be weak. Interacts with host PACS2. Interacts with host LCK and MAPK3; these interactions inhibit the kinase activity of the latter. Interacts with host ATP6V1H; this interaction may play a role in CD4 endocytosis. Associates with the CD4-Nef-AP2 complex; this complex is required for CD4 internalization. Interacts with host AP2 subunit alpha and AP2 subunit sigma2. Interacts with TCR-zeta chain; this interaction up-regulates the Fas ligand (FasL) surface expression. Interacts with host HCK, LYN, and SRC; these interactions activate the Src family kinases. Interacts with MAP3K5; this interaction inhibits the Fas and TNFR-mediated death signals. Interacts with beta-COP and PTE1. Interacts with human RACK1; this increases Nef phosphorylation by PKC. Interacts with TP53; this interaction decreases the half-life of TP53, protecting the infected cell against p53-mediated apoptosis. Post-translationally, the virion-associated Nef proteins are cleaved by the viral protease to release the soluble C-terminal core protein. Nef is probably cleaved concomitantly with viral structural proteins on maturation of virus particles. In terms of processing, myristoylated. Phosphorylated on serine residues, probably by host PKCdelta and theta.

Its subcellular location is the host cell membrane. The protein resides in the virion. It is found in the secreted. The protein localises to the host Golgi apparatus membrane. Its function is as follows. Factor of infectivity and pathogenicity, required for optimal virus replication. Alters numerous pathways of T-lymphocyte function and down-regulates immunity surface molecules in order to evade host defense and increase viral infectivity. Alters the functionality of other immunity cells, like dendritic cells, monocytes/macrophages and NK cells. In infected CD4(+) T-lymphocytes, down-regulates the surface MHC-I, mature MHC-II, CD4, CD28, CCR5 and CXCR4 molecules. Mediates internalization and degradation of host CD4 through the interaction of with the cytoplasmic tail of CD4, the recruitment of AP-2 (clathrin adapter protein complex 2), internalization through clathrin coated pits, and subsequent transport to endosomes and lysosomes for degradation. Diverts host MHC-I molecules to the trans-Golgi network-associated endosomal compartments by an endocytic pathway to finally target them for degradation. MHC-I down-regulation may involve AP-1 (clathrin adapter protein complex 1) or possibly Src family kinase-ZAP70/Syk-PI3K cascade recruited by PACS2. In consequence infected cells are masked for immune recognition by cytotoxic T-lymphocytes. Decreasing the number of immune receptors also prevents reinfection by more HIV particles (superinfection). Down-regulates host SERINC3 and SERINC5 thereby excluding these proteins from the viral particles. Virion infectivity is drastically higher when SERINC3 or SERINC5 are excluded from the viral envelope, because these host antiviral proteins impair the membrane fusion event necessary for subsequent virion penetration. Functionally, bypasses host T-cell signaling by inducing a transcriptional program nearly identical to that of anti-CD3 cell activation. Interaction with TCR-zeta chain up-regulates the Fas ligand (FasL). Increasing surface FasL molecules and decreasing surface MHC-I molecules on infected CD4(+) cells send attacking cytotoxic CD8+ T-lymphocytes into apoptosis. In terms of biological role, plays a role in optimizing the host cell environment for viral replication without causing cell death by apoptosis. Protects the infected cells from apoptosis in order to keep them alive until the next virus generation is ready to strike. Inhibits the Fas and TNFR-mediated death signals by blocking MAP3K5/ASK1. Decreases the half-life of TP53, protecting the infected cell against p53-mediated apoptosis. Inhibits the apoptotic signals regulated by the Bcl-2 family proteins through the formation of a Nef/PI3-kinase/PAK2 complex that leads to activation of PAK2 and induces phosphorylation of host BAD. Its function is as follows. Extracellular Nef protein targets CD4(+) T-lymphocytes for apoptosis by interacting with CXCR4 surface receptors. The chain is Protein Nef from Homo sapiens (Human).